The chain runs to 608 residues: UvrABC system protein C (608 aa).

The region spanning 16-94 is the GIY-YIG domain; that stretch reads NRPGVYRMFD…IKEWRPPYNI (79 aa). The UVR domain maps to 204 to 239; sequence NALADELNTGMEQAAMRLDFEKAAELRDQVAILRRV.

It belongs to the UvrC family. In terms of assembly, interacts with UvrB in an incision complex.

Its subcellular location is the cytoplasm. Functionally, the UvrABC repair system catalyzes the recognition and processing of DNA lesions. UvrC both incises the 5' and 3' sides of the lesion. The N-terminal half is responsible for the 3' incision and the C-terminal half is responsible for the 5' incision. The chain is UvrABC system protein C from Pseudomonas paraeruginosa (strain DSM 24068 / PA7) (Pseudomonas aeruginosa (strain PA7)).